The chain runs to 498 residues: ATP synthase subunit beta, chloroplastic (498 aa).

172–179 provides a ligand contact to ATP; it reads GGAGVGKT.

The protein belongs to the ATPase alpha/beta chains family. In terms of assembly, F-type ATPases have 2 components, CF(1) - the catalytic core - and CF(0) - the membrane proton channel. CF(1) has five subunits: alpha(3), beta(3), gamma(1), delta(1), epsilon(1). CF(0) has four main subunits: a(1), b(1), b'(1) and c(9-12).

It localises to the plastid. The protein resides in the chloroplast thylakoid membrane. It catalyses the reaction ATP + H2O + 4 H(+)(in) = ADP + phosphate + 5 H(+)(out). Its function is as follows. Produces ATP from ADP in the presence of a proton gradient across the membrane. The catalytic sites are hosted primarily by the beta subunits. The sequence is that of ATP synthase subunit beta, chloroplastic from Daucus carota (Wild carrot).